Consider the following 879-residue polypeptide: Alanine--tRNA ligase 1 (879 aa).

The Zn(2+) site is built by His-566, His-570, Cys-668, and His-672.

The protein belongs to the class-II aminoacyl-tRNA synthetase family. Requires Zn(2+) as cofactor.

The protein resides in the cytoplasm. The enzyme catalyses tRNA(Ala) + L-alanine + ATP = L-alanyl-tRNA(Ala) + AMP + diphosphate. Its function is as follows. Catalyzes the attachment of alanine to tRNA(Ala) in a two-step reaction: alanine is first activated by ATP to form Ala-AMP and then transferred to the acceptor end of tRNA(Ala). Also edits incorrectly charged Ser-tRNA(Ala) and Gly-tRNA(Ala) via its editing domain. The protein is Alanine--tRNA ligase 1 of Lachnoclostridium phytofermentans (strain ATCC 700394 / DSM 18823 / ISDg) (Clostridium phytofermentans).